The primary structure comprises 473 residues: Pup--protein ligase (473 aa).

Mg(2+) is bound at residue E9. ATP is bound at residue R54. Y56 provides a ligand contact to Mg(2+). D58 serves as the catalytic Proton acceptor. E64 is a binding site for Mg(2+). Residues T67 and W425 each contribute to the ATP site.

This sequence belongs to the Pup ligase/Pup deamidase family. Pup-conjugating enzyme subfamily.

The catalysed reaction is ATP + [prokaryotic ubiquitin-like protein]-L-glutamate + [protein]-L-lysine = ADP + phosphate + N(6)-([prokaryotic ubiquitin-like protein]-gamma-L-glutamyl)-[protein]-L-lysine.. It functions in the pathway protein degradation; proteasomal Pup-dependent pathway. It participates in protein modification; protein pupylation. Catalyzes the covalent attachment of the prokaryotic ubiquitin-like protein modifier Pup to the proteasomal substrate proteins, thereby targeting them for proteasomal degradation. This tagging system is termed pupylation. The ligation reaction involves the side-chain carboxylate of the C-terminal glutamate of Pup and the side-chain amino group of a substrate lysine. This is Pup--protein ligase from Brachybacterium faecium (strain ATCC 43885 / DSM 4810 / JCM 11609 / LMG 19847 / NBRC 14762 / NCIMB 9860 / 6-10).